A 325-amino-acid polypeptide reads, in one-letter code: Thiamine-monophosphate kinase (325 aa).

Residues aspartate 27 and aspartate 44 each coordinate Mg(2+). Histidine 51 contributes to the substrate binding site. Aspartate 73 provides a ligand contact to Mg(2+). Residues tyrosine 103, 120 to 121 (GD), and arginine 147 contribute to the ATP site. Position 121 (aspartate 121) interacts with Mg(2+). Aspartate 215 lines the Mg(2+) pocket. Serine 217 serves as a coordination point for ATP. Aspartate 218 contributes to the Mg(2+) binding site. Substrate contacts are provided by glutamate 264 and tyrosine 321.

This sequence belongs to the thiamine-monophosphate kinase family.

It carries out the reaction thiamine phosphate + ATP = thiamine diphosphate + ADP. It participates in cofactor biosynthesis; thiamine diphosphate biosynthesis; thiamine diphosphate from thiamine phosphate: step 1/1. Functionally, catalyzes the ATP-dependent phosphorylation of thiamine-monophosphate (TMP) to form thiamine-pyrophosphate (TPP), the active form of vitamin B1. This chain is Thiamine-monophosphate kinase, found in Bacillus subtilis (strain 168).